The following is a 209-amino-acid chain: Cilia- and flagella-associated protein 418 (209 aa).

A required for interaction with FAM161A region spans residues 1–76; the sequence is MAKDLDELLD…LINEIFEEPD (76 aa). The interval 24–58 is disordered; the sequence is LDLGERPKGDGGGGSHSGDRNGAQEKETLRSTETF. The segment covering 40–58 has biased composition (basic and acidic residues); sequence SGDRNGAQEKETLRSTETF.

As to quaternary structure, interacts (via N-terminus) with FAM161A (via central region); the interaction is direct. As to expression, expressed in multiple tissues, including the brain, kidney, lung, spleen, heart, trachea and testis. Expressed in the retina (at protein level).

Its subcellular location is the cytoplasm. It is found in the photoreceptor inner segment. Its function is as follows. May be involved in photoreceptor outer segment disk morphogenesis. The sequence is that of Cilia- and flagella-associated protein 418 from Mus musculus (Mouse).